Reading from the N-terminus, the 392-residue chain is MSMPTIRAVRALTVRGGGADYHDQDAGHWIDDHIATPMSRYPEYRQSRQSFGINVLGTLVIEIEASDGTVGFAVTTGGEIGAFIVERHLARFIEGQRVTDIEKMWDQMFYATLYYGRKGVVLNAISGVDLALWDLLGKVRQEPVHQLLGGKVRDELEFYATGARPDLAKEMGFIGGKLPLHHGPAEGDAGLRRNLDALADMRSRVGDDFWLMLDCWMSLDVPYATRLAHGAHALGLKWIEECLPPDDYWGYAKLRRDVPRGMLVTTGEHEATRWGFRMLLEMECCDIIQPDVGWCGGLTELMRISALADARGVLVIPHGSSVYSYHFVATRHNSPFAEFLMMAPQADRVVPMFDPLLLDEPVPVGGRMKVPDTAGFGVRLNPDVRMQRPYEH.

Substrate-binding residues include H22 and R48. Residues D214, E240, and E268 each coordinate Mg(2+). H318 (proton acceptor) is an active-site residue. E338 contributes to the substrate binding site.

It belongs to the mandelate racemase/muconate lactonizing enzyme family. RhamD subfamily. In terms of assembly, homooctamer; tetramer of dimers. Mg(2+) serves as cofactor.

The enzyme catalyses L-rhamnonate = 2-dehydro-3-deoxy-L-rhamnonate + H2O. Catalyzes the dehydration of L-rhamnonate to 2-keto-3-deoxy-L-rhamnonate (KDR). This is L-rhamnonate dehydratase from Burkholderia ambifaria (strain ATCC BAA-244 / DSM 16087 / CCUG 44356 / LMG 19182 / AMMD) (Burkholderia cepacia (strain AMMD)).